A 181-amino-acid chain; its full sequence is Transcription termination/antitermination protein NusG (181 aa).

In terms of domain architecture, KOW spans 130–161; the sequence is PGEMVRVNDGPFADFNGVVEEVDYEKSRLKVS.

This sequence belongs to the NusG family. In terms of assembly, monomer. Interacts with the transcription termination factor Rho and with RNA polymerase.

Participates in transcription elongation, termination and antitermination. In the absence of Rho, increases the rate of transcription elongation by the RNA polymerase (RNAP), probably by partially suppressing pausing. In the presence of Rho, modulates most Rho-dependent termination events by interacting with the RNAP to render the complex more susceptible to the termination activity of Rho. May be required to overcome a kinetic limitation of Rho to function at certain terminators. Also involved in ribosomal RNA transcriptional antitermination. The chain is Transcription termination/antitermination protein NusG from Salmonella typhi.